We begin with the raw amino-acid sequence, 93 residues long: Acylphosphatase (93 aa).

A disulfide bond links Cys5 and Cys49. One can recognise an Acylphosphatase-like domain in the interval 5–93 (CIIAWVYGRV…ETLTGFSIRY (89 aa)). Catalysis depends on residues Arg20 and Asn38.

It belongs to the acylphosphatase family.

The enzyme catalyses an acyl phosphate + H2O = a carboxylate + phosphate + H(+). This Salmonella typhi protein is Acylphosphatase.